A 455-amino-acid chain; its full sequence is Phosphoglucosamine/phosphogalactosamine mutase (455 aa).

The active-site Phosphoserine intermediate is serine 97. Mg(2+)-binding residues include serine 97, aspartate 241, aspartate 243, and aspartate 245. The residue at position 97 (serine 97) is a Phosphoserine.

Belongs to the phosphohexose mutase family. It depends on Mg(2+) as a cofactor. Activated by phosphorylation.

The enzyme catalyses alpha-D-glucosamine 1-phosphate = D-glucosamine 6-phosphate. The catalysed reaction is D-galactosamine 6-phosphate = alpha-D-galactosamine 1-phosphate. Functionally, involved in the synthesis of UDP-N-acetylglucosamine (UDP-GlcNAc) and UDP-N-acetylgalactosamine (UDP-GalNAc). Catalyzes the conversion of glucosamine-6-phosphate to glucosamine-1-phosphate and of galactosamine-6-phosphate to galactosamine-1-phosphate. This Sulfurisphaera tokodaii (strain DSM 16993 / JCM 10545 / NBRC 100140 / 7) (Sulfolobus tokodaii) protein is Phosphoglucosamine/phosphogalactosamine mutase.